We begin with the raw amino-acid sequence, 176 residues long: ATP-dependent protease subunit HslV (176 aa).

The active site involves threonine 5. Residues glycine 161, cysteine 164, and threonine 167 each contribute to the Na(+) site.

It belongs to the peptidase T1B family. HslV subfamily. In terms of assembly, a double ring-shaped homohexamer of HslV is capped on each side by a ring-shaped HslU homohexamer. The assembly of the HslU/HslV complex is dependent on binding of ATP.

Its subcellular location is the cytoplasm. It carries out the reaction ATP-dependent cleavage of peptide bonds with broad specificity.. With respect to regulation, allosterically activated by HslU binding. In terms of biological role, protease subunit of a proteasome-like degradation complex believed to be a general protein degrading machinery. This is ATP-dependent protease subunit HslV from Wolinella succinogenes (strain ATCC 29543 / DSM 1740 / CCUG 13145 / JCM 31913 / LMG 7466 / NCTC 11488 / FDC 602W) (Vibrio succinogenes).